Consider the following 304-residue polypeptide: tRNA pseudouridine synthase B (304 aa).

D38 (nucleophile) is an active-site residue.

It belongs to the pseudouridine synthase TruB family. Type 1 subfamily.

The catalysed reaction is uridine(55) in tRNA = pseudouridine(55) in tRNA. Its function is as follows. Responsible for synthesis of pseudouridine from uracil-55 in the psi GC loop of transfer RNAs. This chain is tRNA pseudouridine synthase B, found in Listeria monocytogenes serotype 4b (strain F2365).